A 51-amino-acid polypeptide reads, in one-letter code: uncharacterized protein (51 aa).

2 helical membrane-spanning segments follow: residues 6–26 (LLGVISFICWIVACVLTICID) and 28–48 (SSVFSQALAQGMCAYLTFVLL).

The protein resides in the host membrane. This is an uncharacterized protein from Enterobacteria phage T4 (Bacteriophage T4).